A 273-amino-acid polypeptide reads, in one-letter code: Undecaprenyl-diphosphatase (273 aa).

A run of 6 helical transmembrane segments spans residues Ile43 to Tyr63, Lys82 to Ile102, Leu109 to Ala129, Thr185 to Leu205, Ala214 to Val234, and Phe249 to Ile269.

Belongs to the UppP family.

The protein resides in the cell inner membrane. The catalysed reaction is di-trans,octa-cis-undecaprenyl diphosphate + H2O = di-trans,octa-cis-undecaprenyl phosphate + phosphate + H(+). Catalyzes the dephosphorylation of undecaprenyl diphosphate (UPP). Confers resistance to bacitracin. This chain is Undecaprenyl-diphosphatase, found in Laribacter hongkongensis (strain HLHK9).